The sequence spans 155 residues: MRKNRAEKRDVLADPIYNSKLVTRAINKIMLDGKRGIAQSIIYDAFNIIKEKTNKEPIEVFNKAIENIKPHLELKVRRIGGANYQVPVEVSAERQITLALRWLINYARLRNEKVMTIKLANEIIDASNNIGGSVKKREDTHKMAEANKAFAHYRW.

This sequence belongs to the universal ribosomal protein uS7 family. In terms of assembly, part of the 30S ribosomal subunit. Contacts proteins S9 and S11.

Functionally, one of the primary rRNA binding proteins, it binds directly to 16S rRNA where it nucleates assembly of the head domain of the 30S subunit. Is located at the subunit interface close to the decoding center, probably blocks exit of the E-site tRNA. The chain is Small ribosomal subunit protein uS7 from Mycoplasma capricolum subsp. capricolum (strain California kid / ATCC 27343 / NCTC 10154).